Reading from the N-terminus, the 261-residue chain is UPF0246 protein AZOSEA34360 (261 aa).

Belongs to the UPF0246 family.

The polypeptide is UPF0246 protein AZOSEA34360 (Aromatoleum aromaticum (strain DSM 19018 / LMG 30748 / EbN1) (Azoarcus sp. (strain EbN1))).